Here is a 94-residue protein sequence, read N- to C-terminus: Pyrimidine/purine nucleoside phosphorylase (94 aa).

The protein belongs to the nucleoside phosphorylase PpnP family.

The catalysed reaction is a purine D-ribonucleoside + phosphate = a purine nucleobase + alpha-D-ribose 1-phosphate. It catalyses the reaction adenosine + phosphate = alpha-D-ribose 1-phosphate + adenine. It carries out the reaction cytidine + phosphate = cytosine + alpha-D-ribose 1-phosphate. The enzyme catalyses guanosine + phosphate = alpha-D-ribose 1-phosphate + guanine. The catalysed reaction is inosine + phosphate = alpha-D-ribose 1-phosphate + hypoxanthine. It catalyses the reaction thymidine + phosphate = 2-deoxy-alpha-D-ribose 1-phosphate + thymine. It carries out the reaction uridine + phosphate = alpha-D-ribose 1-phosphate + uracil. The enzyme catalyses xanthosine + phosphate = alpha-D-ribose 1-phosphate + xanthine. Catalyzes the phosphorolysis of diverse nucleosides, yielding D-ribose 1-phosphate and the respective free bases. Can use uridine, adenosine, guanosine, cytidine, thymidine, inosine and xanthosine as substrates. Also catalyzes the reverse reactions. The chain is Pyrimidine/purine nucleoside phosphorylase from Salmonella newport (strain SL254).